Consider the following 394-residue polypeptide: Nicotinate phosphoribosyltransferase (394 aa).

At His218 the chain carries Phosphohistidine; by autocatalysis.

This sequence belongs to the NAPRTase family. In terms of processing, transiently phosphorylated on a His residue during the reaction cycle. Phosphorylation strongly increases the affinity for substrates and increases the rate of nicotinate D-ribonucleotide production. Dephosphorylation regenerates the low-affinity form of the enzyme, leading to product release.

It catalyses the reaction nicotinate + 5-phospho-alpha-D-ribose 1-diphosphate + ATP + H2O = nicotinate beta-D-ribonucleotide + ADP + phosphate + diphosphate. It functions in the pathway cofactor biosynthesis; NAD(+) biosynthesis; nicotinate D-ribonucleotide from nicotinate: step 1/1. Functionally, catalyzes the synthesis of beta-nicotinate D-ribonucleotide from nicotinate and 5-phospho-D-ribose 1-phosphate at the expense of ATP. The protein is Nicotinate phosphoribosyltransferase of Xylella fastidiosa (strain Temecula1 / ATCC 700964).